The primary structure comprises 460 residues: Cysteine--tRNA ligase (460 aa).

Cys-28 is a binding site for Zn(2+). The 'HIGH' region signature appears at 30 to 40; that stretch reads MTVYDYCHLGH. Positions 209, 234, and 238 each coordinate Zn(2+). A 'KMSKS' region motif is present at residues 266-270; sequence KMSKS. Lys-269 contributes to the ATP binding site.

It belongs to the class-I aminoacyl-tRNA synthetase family. As to quaternary structure, monomer. Zn(2+) is required as a cofactor.

The protein resides in the cytoplasm. The catalysed reaction is tRNA(Cys) + L-cysteine + ATP = L-cysteinyl-tRNA(Cys) + AMP + diphosphate. In Pseudomonas putida (strain ATCC 700007 / DSM 6899 / JCM 31910 / BCRC 17059 / LMG 24140 / F1), this protein is Cysteine--tRNA ligase.